The primary structure comprises 412 residues: Putative competence-damage inducible protein (412 aa).

The protein belongs to the CinA family.

This chain is Putative competence-damage inducible protein, found in Clostridium perfringens (strain ATCC 13124 / DSM 756 / JCM 1290 / NCIMB 6125 / NCTC 8237 / Type A).